The sequence spans 473 residues: H(+)/Cl(-) exchange transporter ClcA (473 aa).

Topologically, residues 1-32 (MKTDNSTFLAQQIVRLRRRDQIRRLMQRDKTP) are cytoplasmic. A helical transmembrane segment spans residues 33–69 (LAILFMAAVVGTLTGLVGVAFEKAVSWVQNMRIGALV). Topologically, residues 70–76 (QVADHAF) are periplasmic. The chain crosses the membrane as a helical span at residues 77–100 (LLWPLAFILSALLAMVGYFLVRKF). The short motif at 106–110 (GSGIP) is the Selectivity filter part_1 element. Serine 107 serves as a coordination point for chloride. Positions 109-116 (IPEIEGAL) form an intramembrane region, helical. Residues 117-123 (EELRPVR) are Cytoplasmic-facing. 2 helical membrane-spanning segments follow: residues 124-141 (WWRVLPVKFIGGMGTLGA) and 148-166 (EGPTVQIGGNLGRMVLDVF). The Selectivity filter part_2 motif lies at 146-150 (GREGP). Residues 167-176 (RMRSAEARHT) are Cytoplasmic-facing. Intramembrane regions (helical) lie at residues 177-189 (LLATGAAAGLSAA) and 193-201 (PLAGILFII). Residues 202-214 (EEMRPQFRYNLIS) are Cytoplasmic-facing. Residues 215–232 (IKAVFTGVIMSSIVFRIF) form a helical membrane-spanning segment. Over 233 to 252 (NGEAPIIEVGKLSDAPVNTL) the chain is Periplasmic. Residues 253–281 (WLYLILGIIFGCVGPVFNSLVLRTQDMFQ) traverse the membrane as a helical segment. The Cytoplasmic portion of the chain corresponds to 282–287 (RFHGGE). A helical transmembrane segment spans residues 288-309 (IKKWVLMGGAIGGLCGILGLIE). Residues 310-329 (PEAAGGGFNLIPIAAAGNFS) lie on the Periplasmic side of the membrane. 2 helical membrane passes run 330–349 (VGLLLFIFITRVVTTLLCFS) and 355–376 (GIFAPMLALGTLLGTAFGMAAA). Residues 355–359 (GIFAP) carry the Selectivity filter part_3 motif. The chloride site is built by isoleucine 356 and phenylalanine 357. The Periplasmic segment spans residues 377–386 (VLFPQYHLEA). Residues 387 to 401 (GTFAIAGMGALMAAS) constitute an intramembrane region (helical). Positions 402–404 (VRA) form an intramembrane region, note=Loop between two helices. Residues 405–416 (PLTGIVLVLEMT) constitute an intramembrane region (helical). Residues 417 to 421 (DNYQL) constitute an intramembrane region (note=Loop between two helices). A helical membrane pass occupies residues 422 to 438 (ILPMIITCLGATLLAQF). The Cytoplasmic segment spans residues 439-473 (LGGKPLYSTILARTLAKQDAEQAAKNQNAPAGENT). Residue tyrosine 445 participates in chloride binding.

The protein belongs to the chloride channel (TC 2.A.49) family. ClcA subfamily. In terms of assembly, homodimer.

Its subcellular location is the cell inner membrane. It carries out the reaction 2 chloride(in) + H(+)(out) = 2 chloride(out) + H(+)(in). Proton-coupled chloride transporter. Functions as antiport system and exchanges two chloride ions for 1 proton. Probably acts as an electrical shunt for an outwardly-directed proton pump that is linked to amino acid decarboxylation, as part of the extreme acid resistance (XAR) response. This chain is H(+)/Cl(-) exchange transporter ClcA, found in Salmonella schwarzengrund (strain CVM19633).